A 406-amino-acid chain; its full sequence is B3 domain-containing protein Os11g0197600 (406 aa).

The disordered stretch occupies residues 1-20; that stretch reads MVVREKQGGRMGKGKGKGKE. The segment at residues 30 to 123 is a DNA-binding region (TF-B3 1); sequence RSFFRVLLTL…QFSVTVFEPS (94 aa). The segment at 199–245 is disordered; sequence ESSRRKRAGASAGKSKVTSTSHNSTRGSSCSSDEDNSSSKSPNPPFL. Positions 214–225 are enriched in polar residues; sequence KVTSTSHNSTRG. Positions 298–393 form a DNA-binding region, TF-B3 2; it reads AVQIMMESYV…NIKVHIYRVV (96 aa).

It is found in the nucleus. The sequence is that of B3 domain-containing protein Os11g0197600 from Oryza sativa subsp. japonica (Rice).